Here is a 553-residue protein sequence, read N- to C-terminus: Arginine--tRNA ligase (553 aa).

A 'HIGH' region motif is present at residues Ala130 to Gly140.

Belongs to the class-I aminoacyl-tRNA synthetase family. Monomer.

The protein localises to the cytoplasm. The catalysed reaction is tRNA(Arg) + L-arginine + ATP = L-arginyl-tRNA(Arg) + AMP + diphosphate. The chain is Arginine--tRNA ligase from Corynebacterium aurimucosum (strain ATCC 700975 / DSM 44827 / CIP 107346 / CN-1) (Corynebacterium nigricans).